A 141-amino-acid chain; its full sequence is Large ribosomal subunit protein uL11c (141 aa).

It belongs to the universal ribosomal protein uL11 family. As to quaternary structure, part of the ribosomal stalk of the 50S ribosomal subunit. Interacts with L10 and the large rRNA to form the base of the stalk. L10 forms an elongated spine to which L12 dimers bind in a sequential fashion forming a multimeric L10(L12)X complex.

The protein localises to the plastid. The protein resides in the chloroplast. Forms part of the ribosomal stalk which helps the ribosome interact with GTP-bound translation factors. This is Large ribosomal subunit protein uL11c from Thalassiosira pseudonana (Marine diatom).